A 162-amino-acid polypeptide reads, in one-letter code: MSQTPPPNRLCAVTLDDASIGRSGADVEHERAIAIYDLLEDNRFTPVGDPGEGPYTLHIGLMDNRLVLDIRREKGSEPVVQHHLSLSPLRKVVKDYFLICESYYAAIRTASPTQIEAIDMGRRGLHNEGSTLLQERLKDKVEVDFDTARRLFTLICALHWKG.

It belongs to the UPF0262 family.

The protein is UPF0262 protein AZC_3148 of Azorhizobium caulinodans (strain ATCC 43989 / DSM 5975 / JCM 20966 / LMG 6465 / NBRC 14845 / NCIMB 13405 / ORS 571).